We begin with the raw amino-acid sequence, 431 residues long: Argininosuccinate lyase (431 aa).

This sequence belongs to the lyase 1 family. Argininosuccinate lyase subfamily.

The protein resides in the cytoplasm. The enzyme catalyses 2-(N(omega)-L-arginino)succinate = fumarate + L-arginine. Its pathway is amino-acid biosynthesis; L-arginine biosynthesis; L-arginine from L-ornithine and carbamoyl phosphate: step 3/3. The sequence is that of Argininosuccinate lyase from Stenotrophomonas maltophilia (strain K279a).